The primary structure comprises 170 residues: Photosystem II extrinsic protein V (170 aa).

Positions 1 to 33 (MASLFSTLQRSLKGLLILVPVLIGLVLASPAEA) are cleaved as a signal peptide. Residues Cys-70, Cys-73, His-74, and Met-137 each coordinate heme c.

The protein belongs to the cytochrome c family. PsbV subfamily. PSII is composed of 1 copy each of membrane proteins PsbA, PsbB, PsbC, PsbD, PsbE, PsbF, PsbH, PsbI, PsbJ, PsbK, PsbL, PsbM, PsbT, PsbX, PsbY, PsbZ, Psb30/Ycf12, peripheral proteins PsbO, CyanoQ (PsbQ), PsbU, PsbV and a large number of cofactors. It forms dimeric complexes. It depends on heme c as a cofactor.

Its subcellular location is the cellular thylakoid membrane. In terms of biological role, one of the extrinsic, lumenal subunits of photosystem II (PSII). PSII is a light-driven water plastoquinone oxidoreductase, using light energy to abstract electrons from H(2)O, generating a proton gradient subsequently used for ATP formation. The extrinsic proteins stabilize the structure of photosystem II oxygen-evolving complex (OEC), the ion environment of oxygen evolution and protect the OEC against heat-induced inactivation. Low-potential cytochrome c that plays a role in the OEC of PSII. The polypeptide is Photosystem II extrinsic protein V (Parasynechococcus marenigrum (strain WH8102)).